A 568-amino-acid chain; its full sequence is Type 2 DNA topoisomerase 6 subunit B (568 aa).

Residues Asn-46, Asp-78, 99 to 100 (TK), 109 to 116 (GQQGIGIS), and Lys-473 each bind ATP.

The protein belongs to the TOP6B family. In terms of assembly, homodimer. Heterotetramer of two Top6A and two Top6B chains.

It carries out the reaction ATP-dependent breakage, passage and rejoining of double-stranded DNA.. Its function is as follows. Relaxes both positive and negative superturns and exhibits a strong decatenase activity. The protein is Type 2 DNA topoisomerase 6 subunit B of Pyrococcus furiosus (strain ATCC 43587 / DSM 3638 / JCM 8422 / Vc1).